A 399-amino-acid chain; its full sequence is UDP-N-acetylglucosamine--N-acetylmuramyl-(pentapeptide) pyrophosphoryl-undecaprenol N-acetylglucosamine transferase (399 aa).

Over residues 1–21 the composition is skewed to basic residues; the sequence is MTSRFGHSHHPRRGRSARARA. The interval 1–30 is disordered; the sequence is MTSRFGHSHHPRRGRSARARAGRREGVQSN. UDP-N-acetyl-alpha-D-glucosamine contacts are provided by residues 58–60, Asn-170, Arg-206, Ser-234, Ile-288, and Gln-333; that span reads TGG.

The protein belongs to the glycosyltransferase 28 family. MurG subfamily.

Its subcellular location is the cell inner membrane. It carries out the reaction di-trans,octa-cis-undecaprenyl diphospho-N-acetyl-alpha-D-muramoyl-L-alanyl-D-glutamyl-meso-2,6-diaminopimeloyl-D-alanyl-D-alanine + UDP-N-acetyl-alpha-D-glucosamine = di-trans,octa-cis-undecaprenyl diphospho-[N-acetyl-alpha-D-glucosaminyl-(1-&gt;4)]-N-acetyl-alpha-D-muramoyl-L-alanyl-D-glutamyl-meso-2,6-diaminopimeloyl-D-alanyl-D-alanine + UDP + H(+). The protein operates within cell wall biogenesis; peptidoglycan biosynthesis. Cell wall formation. Catalyzes the transfer of a GlcNAc subunit on undecaprenyl-pyrophosphoryl-MurNAc-pentapeptide (lipid intermediate I) to form undecaprenyl-pyrophosphoryl-MurNAc-(pentapeptide)GlcNAc (lipid intermediate II). This chain is UDP-N-acetylglucosamine--N-acetylmuramyl-(pentapeptide) pyrophosphoryl-undecaprenol N-acetylglucosamine transferase, found in Acidovorax ebreus (strain TPSY) (Diaphorobacter sp. (strain TPSY)).